A 1022-amino-acid chain; its full sequence is Polyamine-modulated factor 1-binding protein 1 (1022 aa).

Coiled-coil stretches lie at residues 89–121 (NKQY…LQAS), 169–281 (EKLH…ACSN), 312–377 (SEDC…LREE), 411–732 (LKKD…SAIQ), and 758–968 (QDDL…KAGN). Composition is skewed to basic and acidic residues over residues 545-556 (QKESSKIEEERK) and 571-582 (EGQRRLSNAEKE). A disordered region spans residues 545 to 582 (QKESSKIEEERKHNRQRLQELSSELSEGQRRLSNAEKE).

In terms of tissue distribution, expressed in the testis.

The protein resides in the cell projection. Its subcellular location is the cilium. It is found in the flagellum. Its function is as follows. Required for normal spermatogenesis. It functions as a scaffold protein that attaches the sperm head-tail connecting piece to the nuclear envelope, thus maintaining sperm head and tail integrity. May also be involved in the general organization of cellular cytoskeleton. The protein is Polyamine-modulated factor 1-binding protein 1 (Pmfbp1) of Mus musculus (Mouse).